The following is a 117-amino-acid chain: uncharacterized protein (117 aa).

The helical transmembrane segment at 76-96 threads the bilayer; sequence FIMSSGCFLIASLSCVGLTVF.

It is found in the membrane. This is an uncharacterized protein from Saccharomyces cerevisiae (strain ATCC 204508 / S288c) (Baker's yeast).